The primary structure comprises 76 residues: MQYKTFLVIFMAYLLVTHEAEAIWSFLIKAATKLLPSLFGGGKKDSSKRKRDVEDFFDPYQRDLDLELERLLSQLQ.

An N-terminal signal peptide occupies residues 1–22 (MQYKTFLVIFMAYLLVTHEAEA). A propeptide spanning residues 47 to 76 (SKRKRDVEDFFDPYQRDLDLELERLLSQLQ) is cleaved from the precursor.

It belongs to the non-disulfide-bridged peptide (NDBP) superfamily. Medium-length antimicrobial peptide (group 3) family. Expressed by the venom gland.

It localises to the secreted. The protein localises to the target cell membrane. Functionally, peptide that shows antimicrobial activity, moderate cytolysis on eukaryote cells and interference with DNA synthesis. Has potent activity against Gram-positive bacteria and moderate activity against Gram-negative bacteria, as well as moderate activity against fungi. Acts by inducing bacterial membrane disruption. Uses multiple modes of action depending on the membrane lipid composition. Uses a toroidal pore mechanism against the prokaryotic like membrane and forms hexagonal phase non-lamellar structures in eukaryotic-like membrane. Shows activity against B.subtilis (MIC=4 ug/ml), S.epidermidis (MIC=8 ug/ml), S.aureus (MIC=8 ug/ml), E.coli (MIC=64 ug/ml), K.pneumoniae (MIC=128 ug/ml), P.aeruginosa (MIC=256 ug/ml), and C.albicans (MIC=32 ug/ml). Shows moderate hemolysis activity. This Scorpio palmatus (Israeli golden scorpion) protein is Antimicrobial peptide Smp24.